Consider the following 566-residue polypeptide: ALBINO3-like protein 3, mitochondrial (566 aa).

A mitochondrion-targeting transit peptide spans 1 to 44 (MAFRRVLLSHLRRSHHTCSSLSPHHVSATTQPSIALALFQSRFF). 4 helical membrane-spanning segments follow: residues 139-159 (WVVI…ILIL), 207-227 (LWVP…ITSI), 249-269 (LTEI…AGLH), and 301-321 (LLTC…LLYW). 4 TPR repeats span residues 386 to 419 (PKEL…DPEY), 420 to 453 (LQAM…LLDT), 465 to 498 (IVAS…KEPD), and 507 to 540 (LDAL…DPSF). Positions 547–566 (CEEDDTIPTSSSSNSTSKTS) are disordered. The segment covering 555–566 (TSSSSNSTSKTS) has biased composition (low complexity).

Belongs to the OXA1/ALB3/YidC (TC 2.A.9.2) family.

Its subcellular location is the mitochondrion inner membrane. Functionally, probably required for the insertion of integral membrane proteins into the mitochondrial inner membrane. The protein is ALBINO3-like protein 3, mitochondrial (ALB3L3) of Arabidopsis thaliana (Mouse-ear cress).